We begin with the raw amino-acid sequence, 212 residues long: Large ribosomal subunit protein uL3 (212 aa).

At Gln-153 the chain carries N5-methylglutamine.

It belongs to the universal ribosomal protein uL3 family. Part of the 50S ribosomal subunit. Forms a cluster with proteins L14 and L19. In terms of processing, methylated by PrmB.

One of the primary rRNA binding proteins, it binds directly near the 3'-end of the 23S rRNA, where it nucleates assembly of the 50S subunit. The polypeptide is Large ribosomal subunit protein uL3 (Acinetobacter baylyi (strain ATCC 33305 / BD413 / ADP1)).